The chain runs to 265 residues: 3-methyl-2-oxobutanoate hydroxymethyltransferase (265 aa).

Mg(2+)-binding residues include D45 and D84. Residues 45-46, D84, and K114 each bind 3-methyl-2-oxobutanoate; that span reads DS. E116 provides a ligand contact to Mg(2+). E183 (proton acceptor) is an active-site residue.

Belongs to the PanB family. In terms of assembly, homodecamer; pentamer of dimers. Requires Mg(2+) as cofactor.

Its subcellular location is the cytoplasm. The enzyme catalyses 3-methyl-2-oxobutanoate + (6R)-5,10-methylene-5,6,7,8-tetrahydrofolate + H2O = 2-dehydropantoate + (6S)-5,6,7,8-tetrahydrofolate. The protein operates within cofactor biosynthesis; (R)-pantothenate biosynthesis; (R)-pantoate from 3-methyl-2-oxobutanoate: step 1/2. Functionally, catalyzes the reversible reaction in which hydroxymethyl group from 5,10-methylenetetrahydrofolate is transferred onto alpha-ketoisovalerate to form ketopantoate. This chain is 3-methyl-2-oxobutanoate hydroxymethyltransferase, found in Salinibacter ruber (strain DSM 13855 / M31).